The chain runs to 240 residues: DNA repair protein RecO (240 aa).

It belongs to the RecO family.

Involved in DNA repair and RecF pathway recombination. This is DNA repair protein RecO from Actinobacillus pleuropneumoniae serotype 7 (strain AP76).